Consider the following 356-residue polypeptide: Carbohydrate sulfotransferase 10 (356 aa).

Residues 1-6 are Cytoplasmic-facing; it reads MHHQWL. Residues 7–27 traverse the membrane as a helical; Signal-anchor for type II membrane protein segment; sequence LLAACFWVIFMFMVASKFITL. Over 28-356 the chain is Lumenal; sequence TFKDPDGYSA…GYQKPDFLLN (329 aa). N-linked (GlcNAc...) asparagine glycosylation occurs at Asn-99. Residues 127–133 and 189–197 contribute to the 3'-phosphoadenylyl sulfate site; these read PKVGNTQ and RDPFERLIS. N-linked (GlcNAc...) asparagine glycosylation is found at Asn-228 and Asn-316.

This sequence belongs to the sulfotransferase 2 family. In myogenic progenitors, it is ubiquitously expressed.

Its subcellular location is the golgi apparatus membrane. The catalysed reaction is 3-O-{beta-D-GlcA-(1-&gt;[3)-alpha-D-Xyl-(1-&gt;3)-beta-D-GlcA-(1-&gt;](n)-4)-beta-D-Xyl-(1-&gt;4)-Rib-ol-P-Rib-ol-P-3-beta-D-GalNAc-(1-&gt;3)-beta-D-GlcNAc-(1-&gt;4)-O-6-P-alpha-D-Man}-L-Thr-[protein] + 3'-phosphoadenylyl sulfate = 3-O-{O-3-S-beta-D-GlcA-(1-&gt;[3)-alpha-D-Xyl-(1-&gt;3)-beta-D-GlcA-(1-&gt;](n)-4)-beta-D-Xyl-(1-&gt;4)-Rib-ol-P-Rib-ol-P-3-beta-D-GalNAc-(1-&gt;3)-beta-D-GlcNAc-(1-&gt;4)-O-6-P-alpha-D-Man}-L-Thr-[protein] + adenosine 3',5'-bisphosphate + H(+). It carries out the reaction 17beta-estradiol 3-O-(beta-D-glucuronate) + 3'-phosphoadenylyl sulfate = 17beta-estradiol 3-O-(3-sulfo-beta-D-glucuronate) + adenosine 3',5'-bisphosphate + H(+). The enzyme catalyses 17beta-estradiol 3-O-(beta-D-glucuronate) 17-sulfate + 3'-phosphoadenylyl sulfate = 17beta-estradiol 3-O-(3-sulfo-beta-D-glucuronate) 17-sulfate + adenosine 3',5'-bisphosphate + H(+). It catalyses the reaction 17beta-estradiol 17-O-(beta-D-glucuronate) + 3'-phosphoadenylyl sulfate = 17beta-estradiol 17-O-(3-sulfo-beta-D-glucuronate) + adenosine 3',5'-bisphosphate + H(+). The catalysed reaction is 16alpha,17beta-estriol 3-O-(beta-D-glucuronate) + 3'-phosphoadenylyl sulfate = 16alpha,17beta-estriol 3-O-(3-sulfo-beta-D-glucuronate) + adenosine 3',5'-bisphosphate + H(+). It carries out the reaction 16alpha,17beta-estriol 16-O-(beta-D-glucuronate) + 3'-phosphoadenylyl sulfate = 16alpha,17beta-estriol 16-O-(3-sulfo-beta-D-glucuronate) + adenosine 3',5'-bisphosphate + H(+). The enzyme catalyses 16alpha,17beta-estriol 17-O-(beta-D-glucuronate) + 3'-phosphoadenylyl sulfate = 16alpha,17beta-estriol 17-O-(3-sulfo-beta-D-glucuronate) + adenosine 3',5'-bisphosphate + H(+). It catalyses the reaction estrone 3-O-(beta-D-glucuronate) + 3'-phosphoadenylyl sulfate = estrone 3-O-(3-sulfo-beta-D-glucuronate) + adenosine 3',5'-bisphosphate + H(+). The catalysed reaction is 3alpha,20alpha-dihydroxy-5beta-pregnane 3-O-(beta-D-glucuronate) + 3'-phosphoadenylyl sulfate = 3alpha,20alpha-dihydroxy-5beta-pregnane 3-O-(3-sulfo-beta-D-glucuronate) + adenosine 3',5'-bisphosphate + H(+). It carries out the reaction testosterone 17-O-(beta-D-glucuronate) + 3'-phosphoadenylyl sulfate = testosterone 17-O-(3-sulfo-beta-D-glucuronate) + adenosine 3',5'-bisphosphate + H(+). The enzyme catalyses 3beta-androst-5-en-17-one 3-O-(beta-D-glucuronate) + 3'-phosphoadenylyl sulfate = 3beta-androst-5-en-17-one 3-O-(3-sulfo-beta-D-glucuronate) + adenosine 3',5'-bisphosphate + H(+). It catalyses the reaction 3alpha,17alpha-dihydroxy-5beta-androstane-11-one-17beta-carboxylate 3-O-(beta-D-glucuronate) + 3'-phosphoadenylyl sulfate = 3alpha,17alpha-dihydroxy-5beta-androstane-11-one-17beta-carboxylate 3-O-(3-sulfo-beta-D-glucuronate) + adenosine 3',5'-bisphosphate + H(+). The catalysed reaction is 3alpha-hydroxyetiocholan-17-one 3-O-(beta-D-glucuronate) + 3'-phosphoadenylyl sulfate = 3alpha-hydroxyetiocholan-17-one 3-O-(3-sulfo-beta-D-glucuronate) + adenosine 3',5'-bisphosphate + H(+). Its pathway is steroid metabolism. The protein operates within protein modification; carbohydrate sulfation. Its function is as follows. Catalyzes the transfer of sulfate from 3'-phosphoadenylyl sulfate (PAPS) to position 3 of terminal glucuronic acid of both protein- and lipid-linked oligosaccharides. Participates in biosynthesis of HNK-1 carbohydrate structure 3-O-sulfo-beta-D-GlcA-(1-&gt;3)-beta-D-Gal-(1-&gt;4)-D-GlcNAc-R, a sulfated glucuronyl-lactosaminyl residue carried by many neural recognition molecules, which is involved in cell interactions during ontogenetic development and in synaptic plasticity in the adult. May be indirectly involved in synapse plasticity of the hippocampus, via its role in HNK-1 biosynthesis. Sulfates terminal glucuronyl residue of the laminin globular (LG)-domain binding epitope on DAG1/alpha-dystroglycan and prevents further polymerization by LARGE1 glycosyltransferase. Likely defines the chain length of LG epitope, conferring binding specificity to extracellular matrix components. Plays a role in down-regulating the steroid hormones. Sulfates glucuronidated estrogens and androgens with an impact in hormone cycle and fertility. Has a preference for glucuronyl moiety at the 3-hydroxyl group of a sterol ring rather than the 17-hydroxyl group, showing high catalytic efficiency for 17beta-estradiol 3-O-(beta-D-glucuronate) and dehydroepiandrosterone 3-O-(beta-D-glucuronate) hormones. The polypeptide is Carbohydrate sulfotransferase 10 (Chst10) (Rattus norvegicus (Rat)).